The following is a 91-amino-acid chain: Small ribosomal subunit protein bS18 (91 aa).

Belongs to the bacterial ribosomal protein bS18 family. Part of the 30S ribosomal subunit. Forms a tight heterodimer with protein bS6.

Its function is as follows. Binds as a heterodimer with protein bS6 to the central domain of the 16S rRNA, where it helps stabilize the platform of the 30S subunit. This Burkholderia multivorans (strain ATCC 17616 / 249) protein is Small ribosomal subunit protein bS18.